We begin with the raw amino-acid sequence, 57 residues long: uncharacterized protein (57 aa).

A helical transmembrane segment spans residues 34–54 (AALLDAAALVVIPGLLTAAAV).

The protein localises to the membrane. This is an uncharacterized protein from Dictyostelium discoideum (Social amoeba).